The following is a 423-amino-acid chain: uncharacterized protein (423 aa).

Lysine 181, aspartate 183, and glutamate 184 together coordinate Mg(2+). Lysine 181 is modified (N6-carboxylysine).

It belongs to the RuBisCO large chain family. Type IV subfamily. The cofactor is Mg(2+).

In terms of biological role, may be involved in sulfur metabolism and oxidative stress response. Does not show RuBisCO activity. This is an uncharacterized protein from Bordetella bronchiseptica (strain ATCC BAA-588 / NCTC 13252 / RB50) (Alcaligenes bronchisepticus).